The following is a 342-amino-acid chain: N-acetyl-gamma-glutamyl-phosphate reductase (342 aa).

Cys-149 is an active-site residue.

Belongs to the NAGSA dehydrogenase family. Type 1 subfamily.

It localises to the cytoplasm. The enzyme catalyses N-acetyl-L-glutamate 5-semialdehyde + phosphate + NADP(+) = N-acetyl-L-glutamyl 5-phosphate + NADPH + H(+). It participates in amino-acid biosynthesis; L-arginine biosynthesis; N(2)-acetyl-L-ornithine from L-glutamate: step 3/4. Its function is as follows. Catalyzes the NADPH-dependent reduction of N-acetyl-5-glutamyl phosphate to yield N-acetyl-L-glutamate 5-semialdehyde. This is N-acetyl-gamma-glutamyl-phosphate reductase from Roseobacter denitrificans (strain ATCC 33942 / OCh 114) (Erythrobacter sp. (strain OCh 114)).